Here is a 372-residue protein sequence, read N- to C-terminus: UDP-N-acetylglucosamine--N-acetylmuramyl-(pentapeptide) pyrophosphoryl-undecaprenol N-acetylglucosamine transferase (372 aa).

UDP-N-acetyl-alpha-D-glucosamine is bound by residues 16–18 (TGG), N128, R164, S192, I250, and Q295.

This sequence belongs to the glycosyltransferase 28 family. MurG subfamily.

The protein resides in the cell inner membrane. It carries out the reaction di-trans,octa-cis-undecaprenyl diphospho-N-acetyl-alpha-D-muramoyl-L-alanyl-D-glutamyl-meso-2,6-diaminopimeloyl-D-alanyl-D-alanine + UDP-N-acetyl-alpha-D-glucosamine = di-trans,octa-cis-undecaprenyl diphospho-[N-acetyl-alpha-D-glucosaminyl-(1-&gt;4)]-N-acetyl-alpha-D-muramoyl-L-alanyl-D-glutamyl-meso-2,6-diaminopimeloyl-D-alanyl-D-alanine + UDP + H(+). It participates in cell wall biogenesis; peptidoglycan biosynthesis. Cell wall formation. Catalyzes the transfer of a GlcNAc subunit on undecaprenyl-pyrophosphoryl-MurNAc-pentapeptide (lipid intermediate I) to form undecaprenyl-pyrophosphoryl-MurNAc-(pentapeptide)GlcNAc (lipid intermediate II). In Paraburkholderia xenovorans (strain LB400), this protein is UDP-N-acetylglucosamine--N-acetylmuramyl-(pentapeptide) pyrophosphoryl-undecaprenol N-acetylglucosamine transferase.